A 28-amino-acid chain; its full sequence is Potassium channel toxin alpha-KTx 9.5 (28 aa).

3 disulfide bridges follow: Cys-3–Cys-19, Cys-6–Cys-24, and Cys-10–Cys-26. A Valine amide modification is found at Val-28.

As to expression, expressed by the venom gland.

The protein resides in the secreted. In terms of biological role, blocks voltage-gated potassium channels Kv1.1/KCNA1 (IC(50)=145 nM), Kv1.2/KCNA2 (IC(50)=2.5 nM), and Kv1.3/KCNA3 (IC(50)=15). Also inhibits calcium-activated potassium channels (KCa/KCNN). The polypeptide is Potassium channel toxin alpha-KTx 9.5 (Buthus occitanus tunetanus (Common European scorpion)).